The chain runs to 155 residues: uncharacterized protein (155 aa).

An HTH asnC-type domain is found at 4–65; it reads IDEIDEIIVR…VVDTSFFGEF (62 aa). Positions 23-42 form a DNA-binding region, H-T-H motif; the sequence is LTELGKKVGLTASAVKNRIE.

This is an uncharacterized protein from Pyrococcus abyssi (strain GE5 / Orsay).